The following is a 226-amino-acid chain: Putative N-acetylmannosamine-6-phosphate 2-epimerase (226 aa).

It belongs to the NanE family.

The catalysed reaction is an N-acyl-D-glucosamine 6-phosphate = an N-acyl-D-mannosamine 6-phosphate. The protein operates within amino-sugar metabolism; N-acetylneuraminate degradation; D-fructose 6-phosphate from N-acetylneuraminate: step 3/5. In terms of biological role, converts N-acetylmannosamine-6-phosphate (ManNAc-6-P) to N-acetylglucosamine-6-phosphate (GlcNAc-6-P). This Mycoplasma capricolum subsp. capricolum (strain California kid / ATCC 27343 / NCTC 10154) protein is Putative N-acetylmannosamine-6-phosphate 2-epimerase.